A 230-amino-acid chain; its full sequence is Proteasome subunit alpha (230 aa).

The protein belongs to the peptidase T1A family. The 20S proteasome core is composed of 14 alpha and 14 beta subunits that assemble into four stacked heptameric rings, resulting in a barrel-shaped structure. The two inner rings, each composed of seven catalytic beta subunits, are sandwiched by two outer rings, each composed of seven alpha subunits. The catalytic chamber with the active sites is on the inside of the barrel. Has a gated structure, the ends of the cylinder being occluded by the N-termini of the alpha-subunits. Is capped by the proteasome-associated ATPase, ARC.

The protein resides in the cytoplasm. It functions in the pathway protein degradation; proteasomal Pup-dependent pathway. Its activity is regulated as follows. The formation of the proteasomal ATPase ARC-20S proteasome complex, likely via the docking of the C-termini of ARC into the intersubunit pockets in the alpha-rings, may trigger opening of the gate for substrate entry. Interconversion between the open-gate and close-gate conformations leads to a dynamic regulation of the 20S proteasome proteolysis activity. In terms of biological role, component of the proteasome core, a large protease complex with broad specificity involved in protein degradation. The sequence is that of Proteasome subunit alpha from Thermomonospora curvata (strain ATCC 19995 / DSM 43183 / JCM 3096 / KCTC 9072 / NBRC 15933 / NCIMB 10081 / Henssen B9).